An 806-amino-acid chain; its full sequence is Putative phage-related protein YobO (806 aa).

Residues 1-23 (MVHFKNCPDPSLNANSQSHPEFS) form a disordered region. The segment covering 12-21 (LNANSQSHPE) has biased composition (polar residues). PbH1 repeat units lie at residues 199 to 221 (VEYG…DITS), 237 to 259 (SRYI…TTHY), 260 to 292 (SEYI…EIDD), 294 to 315 (SRHV…EVKA), 419 to 441 (SQNI…DINL), and 448 to 470 (TDYI…SIGG).

The protein is Putative phage-related protein YobO (yobO) of Bacillus subtilis (strain 168).